A 237-amino-acid polypeptide reads, in one-letter code: Uridylate kinase (237 aa).

11-14 (KLSG) serves as a coordination point for ATP. G53 provides a ligand contact to UMP. ATP-binding residues include G54 and R58. UMP-binding positions include D73 and 134-141 (TGNPFFTT). Positions 161, 167, and 170 each coordinate ATP.

It belongs to the UMP kinase family. As to quaternary structure, homohexamer.

Its subcellular location is the cytoplasm. It catalyses the reaction UMP + ATP = UDP + ADP. The protein operates within pyrimidine metabolism; CTP biosynthesis via de novo pathway; UDP from UMP (UMPK route): step 1/1. With respect to regulation, inhibited by UTP. Catalyzes the reversible phosphorylation of UMP to UDP. This Burkholderia lata (strain ATCC 17760 / DSM 23089 / LMG 22485 / NCIMB 9086 / R18194 / 383) protein is Uridylate kinase.